The sequence spans 272 residues: 3-methyl-2-oxobutanoate hydroxymethyltransferase (272 aa).

Positions 42 and 86 each coordinate Mg(2+). Residues D42 to S43, D86, and K116 each bind 3-methyl-2-oxobutanoate. E118 is a Mg(2+) binding site. E185 acts as the Proton acceptor in catalysis.

The protein belongs to the PanB family. Homodecamer; pentamer of dimers. Requires Mg(2+) as cofactor.

It is found in the cytoplasm. The catalysed reaction is 3-methyl-2-oxobutanoate + (6R)-5,10-methylene-5,6,7,8-tetrahydrofolate + H2O = 2-dehydropantoate + (6S)-5,6,7,8-tetrahydrofolate. It participates in cofactor biosynthesis; (R)-pantothenate biosynthesis; (R)-pantoate from 3-methyl-2-oxobutanoate: step 1/2. In terms of biological role, catalyzes the reversible reaction in which hydroxymethyl group from 5,10-methylenetetrahydrofolate is transferred onto alpha-ketoisovalerate to form ketopantoate. This chain is 3-methyl-2-oxobutanoate hydroxymethyltransferase, found in Prochlorococcus marinus (strain MIT 9313).